Here is a 152-residue protein sequence, read N- to C-terminus: Cytochrome c-type biogenesis CcmH-like mitochondrial protein (152 aa).

Topologically, residues 1 to 83 are mitochondrial intermembrane; the sequence is MATEEDVKQR…ILYTPKFDLQ (83 aa). Residues cysteine 26 and cysteine 29 each contribute to the heme site. Residues 84–104 form a helical membrane-spanning segment; that stretch reads TAAIWLSPVIVGGVAAGVWAY. Residues 105-152 lie on the Mitochondrial matrix side of the membrane; the sequence is KKHRQRTNVHIMALNLVRGVPLTPREKETMLDVLTPPPPANKWWWPGK.

It belongs to the CcmH/CycL/Ccl2/NrfF family.

It is found in the mitochondrion inner membrane. In terms of biological role, plays a role in mitochondrial cytochrome c maturation. Probable component of a heme lyase complex involved in the reduction of apocytochrome c. This Oryza sativa subsp. indica (Rice) protein is Cytochrome c-type biogenesis CcmH-like mitochondrial protein.